Consider the following 451-residue polypeptide: Probable carboxypeptidase PMAA_093910 (451 aa).

Residues 1–19 (MKVSSLLPSVLLLVGATRA) form the signal peptide. A glycan (N-linked (GlcNAc...) asparagine) is linked at N149. D171 is a Zn(2+) binding site. Catalysis depends on E203, which acts as the Proton acceptor. E204 contributes to the Zn(2+) binding site. An N-linked (GlcNAc...) asparagine glycan is attached at N354.

This sequence belongs to the peptidase M20A family. Requires Zn(2+) as cofactor.

The protein localises to the secreted. The polypeptide is Probable carboxypeptidase PMAA_093910 (Talaromyces marneffei (strain ATCC 18224 / CBS 334.59 / QM 7333) (Penicillium marneffei)).